The primary structure comprises 402 residues: MKITAARVIITCPGRNFVTLKIETDQGVYGIGDATLNGRELSVVAYLQEHVAPCLIGMDPRRIEDIWQYVYRGAYWRRGPVTMRAIAAVDMALWDIKAKMAGMPLYQLLGGRSRDGIMVYGHANGSDIAETVEAVGHYIDMGYKAIRAQTGVPGIKDAYGVGRGKLYYEPADASLPSVTGWDTRKALNYVPKLFEELRKTYGFDHHLLHDGHHRYTPQEAANLGKMLEPYQLFWLEDCTPAENQEAFRLVRQHTVTPLAVGEIFNTIWDAKDLIQNQLIDYIRATVVGAGGLTHLRRIADLASLYQVRTGCHGATDLSPVTMGCALHFDTWVPNFGIQEYMRHTEETDAVFPHDYWFEKGELFVGETPGHGVDIDEELAAKYPYKPAYLPVARLEDGTMWNW.

2 residues coordinate substrate: Asn-37 and His-122. Tyr-159 functions as the Proton donor/acceptor in the catalytic mechanism. Asp-210 contacts Mg(2+). His-212 acts as the Proton donor/acceptor in catalysis. Mg(2+) contacts are provided by Glu-236 and Glu-262. Positions 262, 283, 312, 316, and 339 each coordinate substrate.

The protein belongs to the mandelate racemase/muconate lactonizing enzyme family. GalD subfamily. As to quaternary structure, homotetramer. It depends on Mg(2+) as a cofactor.

The catalysed reaction is D-mannonate = 2-dehydro-3-deoxy-D-gluconate + H2O. Its pathway is carbohydrate metabolism; pentose and glucuronate interconversion. Its function is as follows. Catalyzes the dehydration of D-mannonate. Has no detectable activity with a panel of 70 other acid sugars (in vitro). This is D-mannonate dehydratase (manD) from Novosphingobium aromaticivorans (strain ATCC 700278 / DSM 12444 / CCUG 56034 / CIP 105152 / NBRC 16084 / F199).